Consider the following 693-residue polypeptide: Elongation factor G (693 aa).

Residues 8 to 282 (EKTRNIGIMA…AVLDYLPSPL (275 aa)) form the tr-type G domain. GTP is bound by residues 17-24 (AHVDAGKT), 81-85 (DTPGH), and 135-138 (NKMD).

This sequence belongs to the TRAFAC class translation factor GTPase superfamily. Classic translation factor GTPase family. EF-G/EF-2 subfamily.

It is found in the cytoplasm. Its function is as follows. Catalyzes the GTP-dependent ribosomal translocation step during translation elongation. During this step, the ribosome changes from the pre-translocational (PRE) to the post-translocational (POST) state as the newly formed A-site-bound peptidyl-tRNA and P-site-bound deacylated tRNA move to the P and E sites, respectively. Catalyzes the coordinated movement of the two tRNA molecules, the mRNA and conformational changes in the ribosome. This chain is Elongation factor G, found in Enterococcus faecalis (strain ATCC 700802 / V583).